The sequence spans 283 residues: Pantothenate synthetase (283 aa).

30–37 (MGFLHEGH) serves as a coordination point for ATP. The Proton donor role is filled by His37. Residue Gln61 coordinates (R)-pantoate. Residue Gln61 coordinates beta-alanine. ATP is bound at residue 147 to 150 (GKKD). Gln153 lines the (R)-pantoate pocket. ATP-binding positions include Val176 and 184–187 (MSSR).

The protein belongs to the pantothenate synthetase family. Homodimer.

It is found in the cytoplasm. The catalysed reaction is (R)-pantoate + beta-alanine + ATP = (R)-pantothenate + AMP + diphosphate + H(+). The protein operates within cofactor biosynthesis; (R)-pantothenate biosynthesis; (R)-pantothenate from (R)-pantoate and beta-alanine: step 1/1. Its function is as follows. Catalyzes the condensation of pantoate with beta-alanine in an ATP-dependent reaction via a pantoyl-adenylate intermediate. This is Pantothenate synthetase from Trichlorobacter lovleyi (strain ATCC BAA-1151 / DSM 17278 / SZ) (Geobacter lovleyi).